A 146-amino-acid chain; its full sequence is Inner membrane protein YdgK (146 aa).

Topologically, residues 1-12 (MTTTTPQRIGGW) are cytoplasmic. The chain crosses the membrane as a helical span at residues 13 to 33 (LLGPLAWLLVALLSTTLALLL). Residues 34–59 (YTAALSSPQTFQTLGGQALTTQILWG) lie on the Periplasmic side of the membrane. A helical transmembrane segment spans residues 60 to 80 (VSFITAIALWYYTLWLTIAFF). Over 81-89 (KRRRCVPKH) the chain is Cytoplasmic. The helical transmembrane segment at 90 to 110 (YIIWLLISVLLAVKAFAFSPV) threads the bilayer. Residues 111 to 112 (ED) are Periplasmic-facing. A helical membrane pass occupies residues 113 to 133 (GIAVRQLLFTLLATALIVPYF). The Cytoplasmic portion of the chain corresponds to 134-146 (KRSSRVKATFVNP).

The protein to Synechocystis PCC 6803 sll0481.

It localises to the cell inner membrane. The chain is Inner membrane protein YdgK (ydgK) from Escherichia coli (strain K12).